A 285-amino-acid polypeptide reads, in one-letter code: Probable endonuclease 4 (285 aa).

Zn(2+)-binding residues include His69, His109, Glu145, Asp179, His182, His216, Asp229, His231, and Glu261.

This sequence belongs to the AP endonuclease 2 family. Requires Zn(2+) as cofactor.

It carries out the reaction Endonucleolytic cleavage to 5'-phosphooligonucleotide end-products.. Its function is as follows. Endonuclease IV plays a role in DNA repair. It cleaves phosphodiester bonds at apurinic or apyrimidinic (AP) sites, generating a 3'-hydroxyl group and a 5'-terminal sugar phosphate. In Enterobacter sp. (strain 638), this protein is Probable endonuclease 4.